A 144-amino-acid polypeptide reads, in one-letter code: Large ribosomal subunit protein uL15 (144 aa).

The disordered stretch occupies residues 1 to 48 (MRLNTLSPAAGSKSAAKRVGRGIGSGTGKTCGRGHKGQKSRSGGGVRI). A compositionally biased stretch (gly residues) spans 21–31 (RGIGSGTGKTC).

The protein belongs to the universal ribosomal protein uL15 family. Part of the 50S ribosomal subunit.

Functionally, binds to the 23S rRNA. The sequence is that of Large ribosomal subunit protein uL15 from Shewanella woodyi (strain ATCC 51908 / MS32).